The following is a 146-amino-acid chain: Cystatin-C (146 aa).

Positions 1–26 (MAGPLRAPLLLLAILAVALAVSPAAG) are cleaved as a signal peptide. At serine 43 the chain carries Phosphoserine. A Secondary area of contact motif is present at residues 81 to 85 (QIVAG). Intrachain disulfides connect cysteine 99–cysteine 109 and cysteine 123–cysteine 143.

Belongs to the cystatin family.

It localises to the secreted. As an inhibitor of cysteine proteinases, this protein is thought to serve an important physiological role as a local regulator of this enzyme activity. This Macaca mulatta (Rhesus macaque) protein is Cystatin-C (CST3).